The following is an 847-amino-acid chain: Leucine--tRNA ligase (847 aa).

Positions 43–53 match the 'HIGH' region motif; the sequence is PYPSGKLHMGH. Positions 607–611 match the 'KMSKS' region motif; it reads KMSKS. ATP is bound at residue Lys-610.

Belongs to the class-I aminoacyl-tRNA synthetase family.

It localises to the cytoplasm. The catalysed reaction is tRNA(Leu) + L-leucine + ATP = L-leucyl-tRNA(Leu) + AMP + diphosphate. The polypeptide is Leucine--tRNA ligase (Buchnera aphidicola subsp. Cinara cedri (strain Cc)).